We begin with the raw amino-acid sequence, 283 residues long: Thymidylate synthase (283 aa).

Arginine 22 is a dUMP binding site. Cysteine 160 functions as the Nucleophile in the catalytic mechanism. Residues 180 to 183, asparagine 191, and 221 to 223 each bind dUMP; these read RSCD and HIY. A (6R)-5,10-methylene-5,6,7,8-tetrahydrofolate-binding site is contributed by aspartate 183. Residue alanine 282 participates in (6R)-5,10-methylene-5,6,7,8-tetrahydrofolate binding.

It belongs to the thymidylate synthase family. Bacterial-type ThyA subfamily. In terms of assembly, homodimer.

The protein resides in the cytoplasm. It catalyses the reaction dUMP + (6R)-5,10-methylene-5,6,7,8-tetrahydrofolate = 7,8-dihydrofolate + dTMP. Its pathway is pyrimidine metabolism; dTTP biosynthesis. Catalyzes the reductive methylation of 2'-deoxyuridine-5'-monophosphate (dUMP) to 2'-deoxythymidine-5'-monophosphate (dTMP) while utilizing 5,10-methylenetetrahydrofolate (mTHF) as the methyl donor and reductant in the reaction, yielding dihydrofolate (DHF) as a by-product. This enzymatic reaction provides an intracellular de novo source of dTMP, an essential precursor for DNA biosynthesis. This chain is Thymidylate synthase, found in Idiomarina loihiensis (strain ATCC BAA-735 / DSM 15497 / L2-TR).